The sequence spans 186 residues: Ribosome-recycling factor (186 aa).

It belongs to the RRF family.

The protein localises to the cytoplasm. Its function is as follows. Responsible for the release of ribosomes from messenger RNA at the termination of protein biosynthesis. May increase the efficiency of translation by recycling ribosomes from one round of translation to another. This chain is Ribosome-recycling factor, found in Chlorobium phaeobacteroides (strain DSM 266 / SMG 266 / 2430).